We begin with the raw amino-acid sequence, 361 residues long: Chorismate synthase (361 aa).

R48 is a binding site for NADP(+). FMN is bound by residues 126 to 128 (RSS), G269, 302 to 306 (KPVPS), and N328.

It belongs to the chorismate synthase family. Homotetramer. The cofactor is FMNH2.

It catalyses the reaction 5-O-(1-carboxyvinyl)-3-phosphoshikimate = chorismate + phosphate. It functions in the pathway metabolic intermediate biosynthesis; chorismate biosynthesis; chorismate from D-erythrose 4-phosphate and phosphoenolpyruvate: step 7/7. In terms of biological role, catalyzes the anti-1,4-elimination of the C-3 phosphate and the C-6 proR hydrogen from 5-enolpyruvylshikimate-3-phosphate (EPSP) to yield chorismate, which is the branch point compound that serves as the starting substrate for the three terminal pathways of aromatic amino acid biosynthesis. This reaction introduces a second double bond into the aromatic ring system. The protein is Chorismate synthase of Treponema denticola (strain ATCC 35405 / DSM 14222 / CIP 103919 / JCM 8153 / KCTC 15104).